A 184-amino-acid polypeptide reads, in one-letter code: Glucosamine 6-phosphate N-acetyltransferase (184 aa).

The N-acetyltransferase domain occupies 39–184; sequence LVLRPLCTAD…ENYMCRRFLK (146 aa). Substrate-binding positions include T61, 108-111, and 120-122; these read KFIH and EDV. Acetyl-CoA is bound at residue 130–135; that stretch reads GKQLGK. Residue 151–152 coordinates substrate; that stretch reads YK. 165–167 lines the acetyl-CoA pocket; sequence YKK. Substrate contacts are provided by E175 and R181.

The protein belongs to the acetyltransferase family. GNA1 subfamily. In terms of assembly, homodimer. As to expression, ubiquitous. Shows a strong differential expression pattern in adult hematopoietic precursor cells.

The protein resides in the golgi apparatus membrane. Its subcellular location is the endosome membrane. The enzyme catalyses D-glucosamine 6-phosphate + acetyl-CoA = N-acetyl-D-glucosamine 6-phosphate + CoA + H(+). It participates in nucleotide-sugar biosynthesis; UDP-N-acetyl-alpha-D-glucosamine biosynthesis; N-acetyl-alpha-D-glucosamine 1-phosphate from alpha-D-glucosamine 6-phosphate (route I): step 1/2. This is Glucosamine 6-phosphate N-acetyltransferase (Gnpnat1) from Mus musculus (Mouse).